The sequence spans 306 residues: D-alanine--D-alanine ligase (306 aa).

Active-site residues include Glu-15 and Ser-150. One can recognise an ATP-grasp domain in the interval 101-303; sequence KLLWKSLSLR…FDELILKILK (203 aa). An ATP-binding site is contributed by 134–189; sequence ILKLKFPVVIKPNNAGSSIGITIVNHPDLLIDSINLAFNYSNNIIIEKFLKGTEYT. Asp-257, Glu-270, and Asn-272 together coordinate Mg(2+). Ser-281 is a catalytic residue.

The protein belongs to the D-alanine--D-alanine ligase family. Mg(2+) serves as cofactor. Mn(2+) is required as a cofactor.

The protein resides in the cytoplasm. The catalysed reaction is 2 D-alanine + ATP = D-alanyl-D-alanine + ADP + phosphate + H(+). The protein operates within cell wall biogenesis; peptidoglycan biosynthesis. Cell wall formation. This chain is D-alanine--D-alanine ligase, found in Buchnera aphidicola subsp. Schizaphis graminum (strain Sg).